Consider the following 80-residue polypeptide: Defensin-like protein 16 (80 aa).

The first 29 residues, 1–29, serve as a signal peptide directing secretion; sequence MAKFASIITLIFAALVLFAAFDAPAMVEA. Position 30 is a pyrrolidone carboxylic acid (glutamine 30). 4 disulfide bridges follow: cysteine 33–cysteine 80, cysteine 44–cysteine 65, cysteine 50–cysteine 74, and cysteine 54–cysteine 76.

Belongs to the DEFL family. Predominantly expressed in leaves.

Its subcellular location is the secreted. Its function is as follows. Confers broad-spectrum resistance to pathogens. Has antifungal activity in vitro. The chain is Defensin-like protein 16 (PDF1.2A) from Arabidopsis thaliana (Mouse-ear cress).